The chain runs to 306 residues: Acetylglutamate kinase (306 aa).

Substrate is bound by residues 68-69, arginine 90, and asparagine 195; that span reads GG.

It belongs to the acetylglutamate kinase family. ArgB subfamily.

The protein resides in the cytoplasm. The enzyme catalyses N-acetyl-L-glutamate + ATP = N-acetyl-L-glutamyl 5-phosphate + ADP. The protein operates within amino-acid biosynthesis; L-arginine biosynthesis; N(2)-acetyl-L-ornithine from L-glutamate: step 2/4. Its function is as follows. Catalyzes the ATP-dependent phosphorylation of N-acetyl-L-glutamate. In Chromohalobacter salexigens (strain ATCC BAA-138 / DSM 3043 / CIP 106854 / NCIMB 13768 / 1H11), this protein is Acetylglutamate kinase.